A 429-amino-acid polypeptide reads, in one-letter code: Ribosomal RNA small subunit methyltransferase B (429 aa).

S-adenosyl-L-methionine-binding positions include 254–260 (CAAPGGK), Asp-277, Asp-303, and Asp-322. Cys-375 acts as the Nucleophile in catalysis.

This sequence belongs to the class I-like SAM-binding methyltransferase superfamily. RsmB/NOP family.

The protein resides in the cytoplasm. It carries out the reaction cytidine(967) in 16S rRNA + S-adenosyl-L-methionine = 5-methylcytidine(967) in 16S rRNA + S-adenosyl-L-homocysteine + H(+). Specifically methylates the cytosine at position 967 (m5C967) of 16S rRNA. The chain is Ribosomal RNA small subunit methyltransferase B from Escherichia coli (strain SMS-3-5 / SECEC).